Consider the following 312-residue polypeptide: Glyoxylate/hydroxypyruvate reductase A (312 aa).

The active site involves Arg-227. His-275 serves as the catalytic Proton donor.

It belongs to the D-isomer specific 2-hydroxyacid dehydrogenase family. GhrA subfamily.

The protein localises to the cytoplasm. The enzyme catalyses glycolate + NADP(+) = glyoxylate + NADPH + H(+). It catalyses the reaction (R)-glycerate + NAD(+) = 3-hydroxypyruvate + NADH + H(+). The catalysed reaction is (R)-glycerate + NADP(+) = 3-hydroxypyruvate + NADPH + H(+). Its function is as follows. Catalyzes the NADPH-dependent reduction of glyoxylate and hydroxypyruvate into glycolate and glycerate, respectively. This Escherichia coli O81 (strain ED1a) protein is Glyoxylate/hydroxypyruvate reductase A.